Consider the following 196-residue polypeptide: Carnitine operon protein CaiE (196 aa).

A disordered region spans residues 173–196 (TQPLRQMEENRPRLQGTTDVTPKR). Over residues 187-196 (QGTTDVTPKR) the composition is skewed to polar residues.

The protein belongs to the transferase hexapeptide repeat family.

It functions in the pathway amine and polyamine metabolism; carnitine metabolism. Overproduction of CaiE stimulates the activity of CaiB and CaiD. This is Carnitine operon protein CaiE from Escherichia coli O127:H6 (strain E2348/69 / EPEC).